The following is a 232-amino-acid chain: Large ribosomal subunit protein uL1 (232 aa).

The protein belongs to the universal ribosomal protein uL1 family. Part of the 50S ribosomal subunit.

Functionally, binds directly to 23S rRNA. The L1 stalk is quite mobile in the ribosome, and is involved in E site tRNA release. In terms of biological role, protein L1 is also a translational repressor protein, it controls the translation of the L11 operon by binding to its mRNA. The sequence is that of Large ribosomal subunit protein uL1 from Rhizobium meliloti (strain 1021) (Ensifer meliloti).